Here is a 105-residue protein sequence, read N- to C-terminus: Cell division protein FtsB (105 aa).

The Cytoplasmic portion of the chain corresponds to 1-3 (MRI). The helical transmembrane segment at 4-21 (VIYSMLVLLIAIQYPLWL) threads the bilayer. The Periplasmic portion of the chain corresponds to 22 to 105 (GKGGWLKVYE…DTAKASTVKQ (84 aa)). Residues 32–60 (MEKQVELQEAKNSLLALRNAKLEGDVKDL) adopt a coiled-coil conformation.

It belongs to the FtsB family. As to quaternary structure, part of a complex composed of FtsB, FtsL and FtsQ.

The protein resides in the cell inner membrane. Functionally, essential cell division protein. May link together the upstream cell division proteins, which are predominantly cytoplasmic, with the downstream cell division proteins, which are predominantly periplasmic. The sequence is that of Cell division protein FtsB from Polynucleobacter asymbioticus (strain DSM 18221 / CIP 109841 / QLW-P1DMWA-1) (Polynucleobacter necessarius subsp. asymbioticus).